Here is a 295-residue protein sequence, read N- to C-terminus: Ribosomal RNA small subunit methyltransferase A (295 aa).

Positions 40, 42, 67, 88, 118, and 135 each coordinate S-adenosyl-L-methionine.

Belongs to the class I-like SAM-binding methyltransferase superfamily. rRNA adenine N(6)-methyltransferase family. RsmA subfamily.

The protein localises to the cytoplasm. It carries out the reaction adenosine(1518)/adenosine(1519) in 16S rRNA + 4 S-adenosyl-L-methionine = N(6)-dimethyladenosine(1518)/N(6)-dimethyladenosine(1519) in 16S rRNA + 4 S-adenosyl-L-homocysteine + 4 H(+). In terms of biological role, specifically dimethylates two adjacent adenosines (A1518 and A1519) in the loop of a conserved hairpin near the 3'-end of 16S rRNA in the 30S particle. May play a critical role in biogenesis of 30S subunits. In Arthrobacter sp. (strain FB24), this protein is Ribosomal RNA small subunit methyltransferase A.